Reading from the N-terminus, the 236-residue chain is V-set and transmembrane domain-containing protein 2A (236 aa).

The N-terminal stretch at 1–24 (MMGIFLVYVGFVFFSVLYVQQGLS) is a signal peptide. Positions 27 to 143 (AKFTEFPRNV…YGELQEHKAQ (117 aa)) constitute an Ig-like V-type domain. Asn35 is a glycosylation site (N-linked (GlcNAc...) asparagine). Cys48 and Cys127 form a disulfide bridge. Asn175 is a glycosylation site (N-linked (GlcNAc...) asparagine). Residues 184–199 (IHGSANQRTHSTSSPQ) show a composition bias toward polar residues. The segment at 184–206 (IHGSANQRTHSTSSPQVVAKIPK) is disordered.

In terms of assembly, homodimer. N-glycosylated. N-linked glycosylation is critical for secretion but not for preadipocyte cell differentiation activity.

It localises to the secreted. Plays a role in the regulation of the early stage of white and brown preadipocyte cell differentiation. Promotes adipogenic commitment of preadipocytes by increasing gene expression of the transcription factor PPARG in a BMP4-dependent signaling pathway. This Homo sapiens (Human) protein is V-set and transmembrane domain-containing protein 2A.